Here is a 464-residue protein sequence, read N- to C-terminus: Type I restriction enzyme EcoKI specificity subunit (464 aa).

It belongs to the type-I restriction system S methylase family. As to quaternary structure, the type I restriction/modification system is composed of three polypeptides R, M and S. The restriction enzyme has stoichiometry R(2)M(2)S(1). The methyltransferase is composed of M(2)S(1). In terms of assembly, (Microbial infection) Interacts with Escherichia phage T7 protein Ocr; this interaction leads to the inhibition of the methyltransferase restriction enzyme M.EcoKI composed of M(2)S(1).

The specificity (S) subunit of a type I restriction enzyme; this subunit dictates DNA sequence specificity. The M and S subunits together form a methyltransferase (MTase) that methylates A-2 on the top and A-3 on the bottom strand of the sequence 5'-AACN(6)GTGC-3'. In the presence of the R subunit the complex can also act as an endonuclease, binding to the same target sequence but cutting the DNA some distance from this site. Whether the DNA is cut or modified depends on the methylation state of the target sequence. When the target site is unmodified, the DNA is cut. When the target site is hemimethylated, the complex acts as a maintenance MTase modifying the DNA so that both strands become methylated. After locating a non-methylated recognition site, the enzyme complex serves as a molecular motor that translocates DNA in an ATP-dependent manner until a collision occurs that triggers cleavage. This is Type I restriction enzyme EcoKI specificity subunit from Escherichia coli (strain K12).